A 630-amino-acid polypeptide reads, in one-letter code: Forkhead box protein O (630 aa).

The segment at 1 to 45 (MDGFVQEWSNLPRSDNGLHMDQLVGELPTDGGFEPQTRARSNTWP) is disordered. Position 43 is a phosphothreonine; by PKB/AKT1 (T43). Residues 92-198 (WGNLSYADLI…ETSRYEKRRG (107 aa)) constitute a DNA-binding region (fork-head). S187 is subject to Phosphoserine; by PKB/AKT1. The segment at 214-260 (GLNDATPSPSSSVSEGLDHFPESPLHSGGFQLSPDFRQRASSNASSC) is disordered. The span at 218 to 227 (ATPSPSSSVS) shows a compositional bias: polar residues. A Phosphoserine; by PKB/AKT1 modification is found at S255. Residues S258, S259, and S264 each carry the phosphoserine modification. Disordered regions lie at residues 318–379 (SAAS…QQQQ) and 403–432 (TRDG…SLNT). 2 stretches are compositionally biased toward low complexity: residues 332-350 (QQQQ…QLPQ) and 367-379 (QPQA…QQQQ). Polar residues-rich tracts occupy residues 408 to 417 (SPNSVTTTMS) and 423 to 432 (SEPSSDSLNT).

In terms of assembly, interacts with melt.

The protein localises to the cytoplasm. The protein resides in the nucleus. Its function is as follows. Transcription factor involved in the regulation of the insulin signaling pathway. Consistently activates both the downstream target Thor\d4EBP and the feedback control target InR. Involved in negative regulation of the cell cycle, modulating cell growth and proliferation. In response to cellular stresses, such as nutrient deprivation or increased levels of reactive oxygen species, foxo is activated and inhibits growth through the action of target genes such as Thor. Foxo activated in the adult fat body can regulate lifespan in adults; an insulin peptide itself may function as one secondary messenger of insulin-regulated aging. Also regulates Lip4, homolog of human acid lipases, thereby acting as a key modulator of lipid metabolism by insulin signaling and integrates insulin responses to glucose and lipid homeostasis. The chain is Forkhead box protein O from Drosophila grimshawi (Hawaiian fruit fly).